The sequence spans 302 residues: Ornithine carbamoyltransferase (302 aa).

Carbamoyl phosphate-binding positions include 52–55 (STRT), Gln-79, Arg-103, and 130–133 (HPCQ). Residues Asn-161, Asp-221, and 225–226 (SM) contribute to the L-ornithine site. Residues 261–262 (CL) and Arg-289 each bind carbamoyl phosphate.

It belongs to the aspartate/ornithine carbamoyltransferase superfamily. OTCase family.

The protein resides in the cytoplasm. The catalysed reaction is carbamoyl phosphate + L-ornithine = L-citrulline + phosphate + H(+). It functions in the pathway amino-acid biosynthesis; L-arginine biosynthesis; L-arginine from L-ornithine and carbamoyl phosphate: step 1/3. Functionally, reversibly catalyzes the transfer of the carbamoyl group from carbamoyl phosphate (CP) to the N(epsilon) atom of ornithine (ORN) to produce L-citrulline. The polypeptide is Ornithine carbamoyltransferase (Syntrophotalea carbinolica (strain DSM 2380 / NBRC 103641 / GraBd1) (Pelobacter carbinolicus)).